Reading from the N-terminus, the 853-residue chain is Neural cell adhesion molecule 1 (853 aa).

An N-terminal signal peptide occupies residues methionine 1–serine 19. 5 consecutive Ig-like C2-type domains span residues leucine 20–asparagine 111, glutamine 116–glutamine 205, proline 212–histidine 300, proline 307–glutamine 412, and proline 415–glutamate 500. Residues leucine 20–threonine 719 are Extracellular-facing. Intrachain disulfides connect cysteine 41-cysteine 96 and cysteine 139-cysteine 189. Heparin is bound by residues lysine 152 to arginine 156 and lysine 161 to arginine 165. N-linked (GlcNAc...) asparagine glycosylation is present at asparagine 222. Cysteines 235 and 286 form a disulfide. N-linked (GlcNAc...) asparagine glycans are attached at residues asparagine 314, asparagine 346, asparagine 432, asparagine 458, and asparagine 487. Cysteine 328 and cysteine 394 are disulfide-bonded. Cysteine 435 and cysteine 488 are joined by a disulfide. Fibronectin type-III domains are found at residues threonine 508–valine 607 and glutamate 609–proline 704. Residues glycine 720–valine 737 traverse the membrane as a helical segment. Residues aspartate 738–alanine 853 lie on the Cytoplasmic side of the membrane. Residues glycine 764–alanine 853 are disordered. Composition is skewed to basic and acidic residues over residues lysine 766–proline 807 and glutamate 815–threonine 829. Phosphoserine occurs at positions 778 and 782. Polar residues predominate over residues threonine 838–alanine 853.

In terms of assembly, interacts with MDK. Found in a complex with SLC39A6, SLC39A10 and with NCAM1; this complex controls NCAM1 phosphorylation and integration into focal adhesion complexes during epithelial-tomesenchymal transition. Interacts with synaptic plasticity regulator PANTS. In terms of processing, polysialylated by ST8SIA2 and ST8SIA4. Polysialylation modulates cell interactions by confering both attractive and repulsive properties that are highly regulated by ST8SIA2 and ST8SIA4. Polysialylation is formed on a-2,3-linked sialic acid of core glycans.

The protein localises to the cell membrane. This protein is a cell adhesion molecule involved in neuron-neuron adhesion, neurite fasciculation, outgrowth of neurites, etc. This chain is Neural cell adhesion molecule 1, found in Bos taurus (Bovine).